The sequence spans 312 residues: R2-like ligand binding oxidase (312 aa).

Residues Glu68, Glu101, and His104 each coordinate Mn(2+). The segment at residues 71–162 (VTQDIQPFMA…AAQVRASATY (92 aa)) is a cross-link (3-(O4'-tyrosyl)-valine (Val-Tyr)). Glu101 is a Fe cation binding site. Positions 167, 202, and 205 each coordinate Fe cation.

The protein belongs to the ribonucleoside diphosphate reductase small chain family. R2-like ligand binding oxidase subfamily. Homodimer. Fe cation is required as a cofactor. Requires Mn(2+) as cofactor.

Its function is as follows. Probable oxidase that might be involved in lipid metabolism. This is R2-like ligand binding oxidase from Mycobacterium sp. (strain KMS).